Reading from the N-terminus, the 305-residue chain is HPr kinase/phosphorylase (305 aa).

Catalysis depends on residues His138 and Lys159. 153–160 (GESGIGKS) serves as a coordination point for ATP. Residue Ser160 participates in Mg(2+) binding. The Proton acceptor; for phosphorylation activity. Proton donor; for dephosphorylation activity role is filled by Asp177. Residues 201–210 (IEIRGIGILD) are important for the catalytic mechanism of both phosphorylation and dephosphorylation. Glu202 is a Mg(2+) binding site. Arg243 is a catalytic residue. The tract at residues 264-269 (PVRPGR) is important for the catalytic mechanism of dephosphorylation.

It belongs to the HPrK/P family. As to quaternary structure, homohexamer. It depends on Mg(2+) as a cofactor.

The catalysed reaction is [HPr protein]-L-serine + ATP = [HPr protein]-O-phospho-L-serine + ADP + H(+). It catalyses the reaction [HPr protein]-O-phospho-L-serine + phosphate + H(+) = [HPr protein]-L-serine + diphosphate. In terms of biological role, catalyzes the ATP- as well as the pyrophosphate-dependent phosphorylation of a specific serine residue in HPr, a phosphocarrier protein of the phosphoenolpyruvate-dependent sugar phosphotransferase system (PTS). HprK/P also catalyzes the pyrophosphate-producing, inorganic phosphate-dependent dephosphorylation (phosphorolysis) of seryl-phosphorylated HPr (P-Ser-HPr). The two antagonistic activities of HprK/P are regulated by several intracellular metabolites, which change their concentration in response to the absence or presence of rapidly metabolisable carbon sources (glucose, fructose, etc.) in the growth medium. Therefore, by controlling the phosphorylation state of HPr, HPrK/P is a sensor enzyme that plays a major role in the regulation of carbon metabolism and sugar transport: it mediates carbon catabolite repression (CCR), and regulates PTS-catalyzed carbohydrate uptake and inducer exclusion. The sequence is that of HPr kinase/phosphorylase from Thermoanaerobacter pseudethanolicus (strain ATCC 33223 / 39E) (Clostridium thermohydrosulfuricum).